The following is a 112-amino-acid chain: FK506-binding protein 1 (112 aa).

Positions 1–10 (MSAPATTQVE) are enriched in polar residues. Residues 1–20 (MSAPATTQVEILQEGDGKTF) form a disordered region. The region spanning 24–112 (GDLVTIHYTG…LFDVELLNVN (89 aa)) is the PPIase FKBP-type domain.

It belongs to the FKBP-type PPIase family. FKBP1 subfamily.

The protein resides in the cytoplasm. It carries out the reaction [protein]-peptidylproline (omega=180) = [protein]-peptidylproline (omega=0). With respect to regulation, inhibited by both FK506 and rapamycin. Functionally, PPIases accelerate the folding of proteins. It catalyzes the cis-trans isomerization of proline imidic peptide bonds in oligopeptides. The sequence is that of FK506-binding protein 1 (FPR1) from Debaryomyces hansenii (strain ATCC 36239 / CBS 767 / BCRC 21394 / JCM 1990 / NBRC 0083 / IGC 2968) (Yeast).